The sequence spans 292 residues: ATP synthase gamma chain (292 aa).

It belongs to the ATPase gamma chain family. As to quaternary structure, F-type ATPases have 2 components, CF(1) - the catalytic core - and CF(0) - the membrane proton channel. CF(1) has five subunits: alpha(3), beta(3), gamma(1), delta(1), epsilon(1). CF(0) has three main subunits: a, b and c.

Its subcellular location is the cell membrane. Its function is as follows. Produces ATP from ADP in the presence of a proton gradient across the membrane. The gamma chain is believed to be important in regulating ATPase activity and the flow of protons through the CF(0) complex. The sequence is that of ATP synthase gamma chain from Streptococcus suis (strain 05ZYH33).